A 271-amino-acid chain; its full sequence is Mannosyl-3-phosphoglycerate phosphatase (271 aa).

Residue Asp-13 is the Nucleophile of the active site. Residues Asp-13, Asp-15, and Asp-214 each coordinate Mg(2+).

This sequence belongs to the HAD-like hydrolase superfamily. MPGP family. Mg(2+) is required as a cofactor.

The protein localises to the cytoplasm. The catalysed reaction is 2-O-(alpha-D-mannosyl)-3-phosphoglycerate + H2O = (2R)-2-O-(alpha-D-mannosyl)-glycerate + phosphate. The chain is Mannosyl-3-phosphoglycerate phosphatase from Escherichia coli O17:K52:H18 (strain UMN026 / ExPEC).